The sequence spans 404 residues: Phosphopentomutase (404 aa).

The Mn(2+) site is built by D10, D303, H308, D344, H345, and H356.

The protein belongs to the phosphopentomutase family. Mn(2+) serves as cofactor.

The protein localises to the cytoplasm. It carries out the reaction 2-deoxy-alpha-D-ribose 1-phosphate = 2-deoxy-D-ribose 5-phosphate. It catalyses the reaction alpha-D-ribose 1-phosphate = D-ribose 5-phosphate. The protein operates within carbohydrate degradation; 2-deoxy-D-ribose 1-phosphate degradation; D-glyceraldehyde 3-phosphate and acetaldehyde from 2-deoxy-alpha-D-ribose 1-phosphate: step 1/2. Functionally, isomerase that catalyzes the conversion of deoxy-ribose 1-phosphate (dRib-1-P) and ribose 1-phosphate (Rib-1-P) to deoxy-ribose 5-phosphate (dRib-5-P) and ribose 5-phosphate (Rib-5-P), respectively. This is Phosphopentomutase from Shewanella baltica (strain OS185).